The primary structure comprises 149 residues: FAD synthase (149 aa).

ATP is bound by residues 9–10, 14–17, Asp93, and Tyr120; these read VF and HPGH.

It belongs to the archaeal FAD synthase family. Homodimer. Requires a divalent metal cation as cofactor.

The enzyme catalyses FMN + ATP + H(+) = FAD + diphosphate. Its pathway is cofactor biosynthesis; FAD biosynthesis; FAD from FMN: step 1/1. Functionally, catalyzes the transfer of the AMP portion of ATP to flavin mononucleotide (FMN) to produce flavin adenine dinucleotide (FAD) coenzyme. The polypeptide is FAD synthase (Aciduliprofundum boonei (strain DSM 19572 / T469)).